The primary structure comprises 223 residues: Pyridoxine/pyridoxamine 5'-phosphate oxidase (223 aa).

Residues 8 to 11 and Lys65 each bind substrate; that span reads RVDY. FMN-binding positions include 60–65, 75–76, Arg81, Lys82, and Gln104; these read RTVLLK and YT. Positions 122, 126, and 130 each coordinate substrate. FMN-binding positions include 139–140 and Trp188; that span reads QS. Substrate is bound at residue 194–196; that stretch reads RLH. Arg198 provides a ligand contact to FMN.

Belongs to the pyridoxamine 5'-phosphate oxidase family. In terms of assembly, homodimer. It depends on FMN as a cofactor.

It catalyses the reaction pyridoxamine 5'-phosphate + O2 + H2O = pyridoxal 5'-phosphate + H2O2 + NH4(+). The catalysed reaction is pyridoxine 5'-phosphate + O2 = pyridoxal 5'-phosphate + H2O2. The protein operates within cofactor metabolism; pyridoxal 5'-phosphate salvage; pyridoxal 5'-phosphate from pyridoxamine 5'-phosphate: step 1/1. It participates in cofactor metabolism; pyridoxal 5'-phosphate salvage; pyridoxal 5'-phosphate from pyridoxine 5'-phosphate: step 1/1. Functionally, catalyzes the oxidation of either pyridoxine 5'-phosphate (PNP) or pyridoxamine 5'-phosphate (PMP) into pyridoxal 5'-phosphate (PLP). The polypeptide is Pyridoxine/pyridoxamine 5'-phosphate oxidase (Kineococcus radiotolerans (strain ATCC BAA-149 / DSM 14245 / SRS30216)).